Reading from the N-terminus, the 156-residue chain is Small ribosomal subunit protein uS7 (156 aa).

Belongs to the universal ribosomal protein uS7 family. As to quaternary structure, part of the 30S ribosomal subunit. Contacts proteins S9 and S11.

Its function is as follows. One of the primary rRNA binding proteins, it binds directly to 16S rRNA where it nucleates assembly of the head domain of the 30S subunit. Is located at the subunit interface close to the decoding center, probably blocks exit of the E-site tRNA. The sequence is that of Small ribosomal subunit protein uS7 from Parvibaculum lavamentivorans (strain DS-1 / DSM 13023 / NCIMB 13966).